The chain runs to 606 residues: Protein spire homolog 2 (606 aa).

Residues 21–219 (LSLEEVLKSY…RALFLETLEL (199 aa)) form the KIND domain. A disordered region spans residues 147–181 (KHCGSNAAKDEGYSGQDEEEEEEEEEEEEGAGRGI). The span at 162 to 175 (QDEEEEEEEEEEEE) shows a compositional bias: acidic residues. WH2 domains lie at 263–277 (QLMK…LKKV) and 357–374 (LHDR…LRPV). Disordered stretches follow at residues 438–464 (DEDS…RSFS) and 517–537 (CRSL…ASHG). The segment covering 445–464 (VDMRRVESSPTPLKRDRSFS) has biased composition (basic and acidic residues). The interval 554-574 (LALTVDGVINVRRILVKAEME) is spir-box.

The protein belongs to the spire family.

The protein resides in the cytoplasm. Its subcellular location is the cytoskeleton. It localises to the cytosol. The protein localises to the cell membrane. It is found in the cytoplasmic vesicle membrane. Acts as an actin nucleation factor, remains associated with the slow-growing pointed end of the new filament. Involved in intracellular vesicle transport along actin fibers, providing a novel link between actin cytoskeleton dynamics and intracellular transport. Required for asymmetric spindle positioning and asymmetric cell division during oocyte meiosis. Required for normal formation of the cleavage furrow and for polar body extrusion during female germ cell meiosis. Also acts in the nucleus: together with SPIRE1 and SPIRE2, promotes assembly of nuclear actin filaments in response to DNA damage in order to facilitate movement of chromatin and repair factors after DNA damage. This chain is Protein spire homolog 2 (spire2), found in Danio rerio (Zebrafish).